Reading from the N-terminus, the 393-residue chain is Elongation factor Tu (393 aa).

Residues K10–V203 form the tr-type G domain. A G1 region spans residues G19–T26. G19 to T26 contacts GTP. Residue T26 participates in Mg(2+) binding. The G2 stretch occupies residues G60–S64. Residues D81–G84 are G3. GTP contacts are provided by residues D81 to H85 and N136 to D139. A G4 region spans residues N136 to D139. The tract at residues S173 to L175 is G5.

It belongs to the TRAFAC class translation factor GTPase superfamily. Classic translation factor GTPase family. EF-Tu/EF-1A subfamily. Monomer.

It localises to the cytoplasm. The enzyme catalyses GTP + H2O = GDP + phosphate + H(+). GTP hydrolase that promotes the GTP-dependent binding of aminoacyl-tRNA to the A-site of ribosomes during protein biosynthesis. The chain is Elongation factor Tu from Chlorobium chlorochromatii (strain CaD3).